The following is a 501-amino-acid chain: Sucrose transport protein SUT2 (501 aa).

Residues 1-31 are Cytoplasmic-facing; sequence MPRRPSGGGGGAGPAAAAVRKVPLRKLLRAA. Residues 32 to 52 form a helical membrane-spanning segment; sequence SVACGVQFGWALQLSLLTPYV. Topologically, residues 53 to 55 are extracellular; sequence QEL. Residues 56–76 form a helical membrane-spanning segment; sequence GIPHAFASLVWLCGPLSGLLV. The Cytoplasmic portion of the chain corresponds to 77–98; that stretch reads QPLVGHLSDRIAPAASPLGRRR. Residues 99–119 traverse the membrane as a helical segment; sequence PFIAAGAASIAAAVLTVGFSA. The Extracellular segment spans residues 120 to 135; it reads DLGRIFGDSITPGSTR. The chain crosses the membrane as a helical span at residues 136-156; sequence LGAIIVYLVGFWLLDVGNNAT. The Cytoplasmic segment spans residues 157 to 176; sequence QGPCRAFLADLTENDPRRTR. The helical transmembrane segment at 177–197 threads the bilayer; sequence IANAYFSLFMALGNILGYATG. At 198 to 222 the chain is on the extracellular side; that stretch reads AYSGWYKIFPFTVTPSCSISCANLK. The chain crosses the membrane as a helical span at residues 223–243; it reads SAFLLDIIILVVTTCITVASV. The Cytoplasmic segment spans residues 244-278; sequence QEPQSFGSDEADHPSTEQEAFLWELFGSFRYFTLP. A helical membrane pass occupies residues 279–299; sequence VWMVLIVTALTWIGWFPFILF. Residues 300-327 are Extracellular-facing; the sequence is DTDWMGREIYRGSPDDPSITQSYHDGVR. The chain crosses the membrane as a helical span at residues 328 to 348; sequence MGSFGLMLNSVLLGFTSIVLE. The Cytoplasmic portion of the chain corresponds to 349 to 356; the sequence is KLCRKWGA. A helical transmembrane segment spans residues 357 to 377; the sequence is GLVWGVSNILMALCFVAMLVI. The Extracellular segment spans residues 378–394; it reads TYVAKNMDYPPSGVPPT. A helical transmembrane segment spans residues 395 to 415; it reads GIVIASLVVFTILGAPLAITY. The Cytoplasmic segment spans residues 416 to 433; sequence SIPYAMAASRVENLGLGQ. Residues 434 to 454 form a helical membrane-spanning segment; sequence GLAMGILNLAIVIPQVIVSLG. Over 455-467 the chain is Extracellular; that stretch reads SGPWDQLFGGGNA. A helical transmembrane segment spans residues 468 to 488; that stretch reads PAFAVAAAASFIGGLVAILGL. Residues 489-501 are Cytoplasmic-facing; the sequence is PRARIASRRRGHR.

This sequence belongs to the glycoside-pentoside-hexuronide (GPH) cation symporter transporter (TC 2.A.2.4) family. Homodimer. In terms of tissue distribution, widely expressed.

The protein localises to the cell membrane. It participates in glycan biosynthesis; sucrose metabolism. In terms of biological role, responsible for the transport of sucrose into the cell, with the concomitant uptake of protons (symport system). May also transport other glucosides. The protein is Sucrose transport protein SUT2 (SUT2) of Oryza sativa subsp. japonica (Rice).